Consider the following 309-residue polypeptide: MDKPAKRIVMIVGPTAVGKSDLGVYLAQQLHGEVINGDAYQIYRHMDIGTAKITPEEMQGVPHHLLDIADPTVAYSVAKFKKAATAMIDTVADRQQLPILVGGTGFYLNSLRLNLPLGGKAPPTAIRQRWQVALATNGQSWLWQQLAQRDPDAAQQIAPANTRRVIRALEVGELTGRRFSDQPQPAPLFSTLVIGLTTDRAVLYDRINARVDAMMQAGLLAEVEQLLKTVPADAQAMQAIGYKELVPYLHGQAELANCVALIKQHSRHFAKRQLTYFRNQMPTHWFDLVAHPEDKNAIVTLVQQWLKQR.

An ATP-binding site is contributed by G13–S20. Substrate is bound at residue T15 to S20.

The protein belongs to the IPP transferase family. As to quaternary structure, monomer. Requires Mg(2+) as cofactor.

It carries out the reaction adenosine(37) in tRNA + dimethylallyl diphosphate = N(6)-dimethylallyladenosine(37) in tRNA + diphosphate. Functionally, catalyzes the transfer of a dimethylallyl group onto the adenine at position 37 in tRNAs that read codons beginning with uridine, leading to the formation of N6-(dimethylallyl)adenosine (i(6)A). The chain is tRNA dimethylallyltransferase from Lacticaseibacillus paracasei (strain ATCC 334 / BCRC 17002 / CCUG 31169 / CIP 107868 / KCTC 3260 / NRRL B-441) (Lactobacillus paracasei).